A 463-amino-acid polypeptide reads, in one-letter code: Metalloprotease slr0863 (463 aa).

Belongs to the peptidase U62 family.

Its function is as follows. Probable metalloprotease. This chain is Metalloprotease slr0863, found in Synechocystis sp. (strain ATCC 27184 / PCC 6803 / Kazusa).